Consider the following 565-residue polypeptide: CTP synthase (565 aa).

Residues 1–272 form an amidoligase domain region; that stretch reads MARPKNVKHI…DLRVMKKLGL (272 aa). S18 is a CTP binding site. UTP is bound at residue S18. 19-24 provides a ligand contact to ATP; the sequence is SLGKGI. Y59 provides a ligand contact to L-glutamine. An ATP-binding site is contributed by D76. Mg(2+) contacts are provided by D76 and E146. Residues 153-155, 193-198, and K229 each bind CTP; these read DIE and KTKPTQ. UTP is bound by residues 193-198 and K229; that span reads KTKPTQ. Residues 299 to 543 enclose the Glutamine amidotransferase type-1 domain; sequence TIGICGKYTE…VHAAKEFAQG (245 aa). G363 lines the L-glutamine pocket. The Nucleophile; for glutamine hydrolysis role is filled by C390. L-glutamine is bound by residues 391 to 394, E414, and R471; that span reads LGMQ. Active-site residues include H516 and E518.

Belongs to the CTP synthase family. As to quaternary structure, homotetramer.

The enzyme catalyses UTP + L-glutamine + ATP + H2O = CTP + L-glutamate + ADP + phosphate + 2 H(+). It carries out the reaction L-glutamine + H2O = L-glutamate + NH4(+). It catalyses the reaction UTP + NH4(+) + ATP = CTP + ADP + phosphate + 2 H(+). It participates in pyrimidine metabolism; CTP biosynthesis via de novo pathway; CTP from UDP: step 2/2. Its activity is regulated as follows. Allosterically activated by GTP, when glutamine is the substrate; GTP has no effect on the reaction when ammonia is the substrate. The allosteric effector GTP functions by stabilizing the protein conformation that binds the tetrahedral intermediate(s) formed during glutamine hydrolysis. Inhibited by the product CTP, via allosteric rather than competitive inhibition. Functionally, catalyzes the ATP-dependent amination of UTP to CTP with either L-glutamine or ammonia as the source of nitrogen. Regulates intracellular CTP levels through interactions with the four ribonucleotide triphosphates. This Chlorobaculum tepidum (strain ATCC 49652 / DSM 12025 / NBRC 103806 / TLS) (Chlorobium tepidum) protein is CTP synthase.